Reading from the N-terminus, the 108-residue chain is Large ribosomal subunit protein P2A (108 aa).

Positions Leu62–Asp108 are disordered. Residues Gly68–Glu84 are compositionally biased toward low complexity. Over residues Ala85–Met102 the composition is skewed to acidic residues. Residue Ser98 is modified to Phosphoserine.

It belongs to the eukaryotic ribosomal protein P1/P2 family.

Its function is as follows. Plays an important role in the elongation step of protein synthesis. The polypeptide is Large ribosomal subunit protein P2A (RPP2A) (Candida albicans (Yeast)).